The following is a 188-amino-acid chain: Putative 3-methyladenine DNA glycosylase (188 aa).

This sequence belongs to the DNA glycosylase MPG family.

The protein is Putative 3-methyladenine DNA glycosylase of Ehrlichia ruminantium (strain Welgevonden).